The following is a 1249-amino-acid chain: DNA-directed RNA polymerase subunit beta (1249 aa).

Belongs to the RNA polymerase beta chain family. In terms of assembly, the RNAP catalytic core consists of 2 alpha, 1 beta, 1 beta' and 1 omega subunit. When a sigma factor is associated with the core the holoenzyme is formed, which can initiate transcription.

It carries out the reaction RNA(n) + a ribonucleoside 5'-triphosphate = RNA(n+1) + diphosphate. Functionally, DNA-dependent RNA polymerase catalyzes the transcription of DNA into RNA using the four ribonucleoside triphosphates as substrates. The protein is DNA-directed RNA polymerase subunit beta of Clostridium botulinum (strain Eklund 17B / Type B).